The following is a 310-amino-acid chain: Protein-L-isoaspartate O-methyltransferase (310 aa).

2 disordered regions span residues 1 to 46 and 60 to 79; these read MSGE…DKPA and ALPG…TVLK. Residues 14–34 are compositionally biased toward basic and acidic residues; sequence EDLKRAPRKSEVRSGSGERHA. Residues 35–46 show a composition bias toward low complexity; the sequence is ASAVPKAADKPA. Residue Ser-157 is part of the active site.

It belongs to the methyltransferase superfamily. L-isoaspartyl/D-aspartyl protein methyltransferase family.

Its subcellular location is the cytoplasm. It carries out the reaction [protein]-L-isoaspartate + S-adenosyl-L-methionine = [protein]-L-isoaspartate alpha-methyl ester + S-adenosyl-L-homocysteine. In terms of biological role, catalyzes the methyl esterification of L-isoaspartyl residues in peptides and proteins that result from spontaneous decomposition of normal L-aspartyl and L-asparaginyl residues. It plays a role in the repair and/or degradation of damaged proteins. This Burkholderia ambifaria (strain ATCC BAA-244 / DSM 16087 / CCUG 44356 / LMG 19182 / AMMD) (Burkholderia cepacia (strain AMMD)) protein is Protein-L-isoaspartate O-methyltransferase.